Consider the following 31-residue polypeptide: Photosystem II reaction center protein T (31 aa).

The helical transmembrane segment at 3 to 23 (ALVYTFLLVGTLGIIFFAIFF) threads the bilayer.

This sequence belongs to the PsbT family. As to quaternary structure, PSII is composed of 1 copy each of membrane proteins PsbA, PsbB, PsbC, PsbD, PsbE, PsbF, PsbH, PsbI, PsbJ, PsbK, PsbL, PsbM, PsbT, PsbY, PsbZ, Psb30/Ycf12, at least 3 peripheral proteins of the oxygen-evolving complex and a large number of cofactors. It forms dimeric complexes.

The protein resides in the plastid. The protein localises to the chloroplast thylakoid membrane. Found at the monomer-monomer interface of the photosystem II (PS II) dimer, plays a role in assembly and dimerization of PSII. PSII is a light-driven water plastoquinone oxidoreductase, using light energy to abstract electrons from H(2)O, generating a proton gradient subsequently used for ATP formation. In Chlorella vulgaris (Green alga), this protein is Photosystem II reaction center protein T.